The chain runs to 225 residues: Ribosomal RNA small subunit methyltransferase G (225 aa).

S-adenosyl-L-methionine-binding positions include G89, L94, 140–141 (IE), and R157.

It belongs to the methyltransferase superfamily. RNA methyltransferase RsmG family.

It localises to the cytoplasm. The catalysed reaction is guanosine(527) in 16S rRNA + S-adenosyl-L-methionine = N(7)-methylguanosine(527) in 16S rRNA + S-adenosyl-L-homocysteine. Specifically methylates the N7 position of guanine in position 527 of 16S rRNA. The protein is Ribosomal RNA small subunit methyltransferase G of Psychrobacter sp. (strain PRwf-1).